The sequence spans 166 residues: Small ribosomal subunit protein uS5 (166 aa).

The S5 DRBM domain occupies 12 to 75 (YIEKLVQVNR…EAARRNMIQV (64 aa)).

It belongs to the universal ribosomal protein uS5 family. Part of the 30S ribosomal subunit. Contacts proteins S4 and S8.

In terms of biological role, with S4 and S12 plays an important role in translational accuracy. Functionally, located at the back of the 30S subunit body where it stabilizes the conformation of the head with respect to the body. The protein is Small ribosomal subunit protein uS5 of Pseudomonas fluorescens (strain Pf0-1).